The sequence spans 217 residues: Non-structural protein NS3 (217 aa).

It belongs to the orbivirus NS3 family.

May play a role in the release of virions from infected cells. The protein is Non-structural protein NS3 (Segment-10) of Camelus dromedarius (Dromedary).